Reading from the N-terminus, the 698-residue chain is Sialic acid-binding Ig-like lectin 11 (698 aa).

An N-terminal signal peptide occupies residues 1–27 (MVPGQAQPQSPEMLLLPLLLPVLGAGS). At 28-561 (LNKDPSYSLQ…KLEHGGGLGL (534 aa)) the chain is on the extracellular side. The 104-residue stretch at 31–134 (DPSYSLQVQR…DEAWYFFRVE (104 aa)) folds into the Ig-like V-type domain. 3 cysteine pairs are disulfide-bonded: cysteine 49/cysteine 186, cysteine 54/cysteine 114, and cysteine 177/cysteine 228. 2 N-linked (GlcNAc...) asparagine glycosylation sites follow: asparagine 55 and asparagine 90. Arginine 132 is an N-acetylneuraminate binding site. Ig-like C2-type domains follow at residues 159–244 (PDVY…RTVR), 251–350 (PKDL…LDLS), and 355–452 (PENL…LSLS). The N-linked (GlcNAc...) asparagine glycan is linked to asparagine 262. Cysteine 287 and cysteine 334 are oxidised to a cystine. 2 N-linked (GlcNAc...) asparagine glycosylation sites follow: asparagine 366 and asparagine 375. Cysteine 391 and cysteine 436 are disulfide-bonded. 2 N-linked (GlcNAc...) asparagine glycosylation sites follow: asparagine 497 and asparagine 515. Residues 562–584 (GAALGAGVAALLAFCSCLVVFRV) traverse the membrane as a helical segment. Residues 585 to 698 (KICRKEARKR…EREMSGMVPK (114 aa)) are Cytoplasmic-facing. A disordered region spans residues 596-635 (AAEQDVPSTLGPISQGHQHECSAGSSQDHPPPGAATYTPG). The ITIM motif motif lies at 642–647 (LHYASL). The residue at position 668 (tyrosine 668) is a Phosphotyrosine. Residues 675–698 (TGQPLRGPGFGLQLEREMSGMVPK) are disordered.

It belongs to the immunoglobulin superfamily. SIGLEC (sialic acid binding Ig-like lectin) family. In terms of assembly, interacts with PTPN6/SHP-1 and PTPN11/SHP-2 upon phosphorylation. Post-translationally, phosphorylated on tyrosine residues. In terms of tissue distribution, expressed by macrophages in various tissues including Kupffer cells. Also found in brain microglia.

It is found in the membrane. Functionally, putative adhesion molecule that mediates sialic-acid dependent binding to cells. Preferentially binds to alpha-2,8-linked sialic acid. The sialic acid recognition site may be masked by cis interactions with sialic acids on the same cell surface. In the immune response, may act as an inhibitory receptor upon ligand induced tyrosine phosphorylation by recruiting cytoplasmic phosphatase(s) via their SH2 domain(s) that block signal transduction through dephosphorylation of signaling molecules. This is Sialic acid-binding Ig-like lectin 11 (SIGLEC11) from Homo sapiens (Human).